The following is a 108-amino-acid chain: UPF0102 protein Shewana3_3881 (108 aa).

This sequence belongs to the UPF0102 family.

The protein is UPF0102 protein Shewana3_3881 of Shewanella sp. (strain ANA-3).